We begin with the raw amino-acid sequence, 2042 residues long: Protein mini spindles (2042 aa).

TOG stretches follow at residues Met1–Ser229 and Met267–Gly505. Positions Met1 to Gly505 are binds tubulin. Promotes microtubule polymerization regions lie at residues Met1–Pro516 and Thr581–Arg1080. HEAT repeat units follow at residues Glu120 to His157, Ile160 to Ala197, Leu270 to Lys311, Gly315 to Lys353, Asn357 to Leu394, Ala396 to Asn433, and Leu440 to Leu478. Positions Glu498–Ser821 are association with microtubule lattice. The tract at residues Pro506–Lys572 is disordered. Residues Ala513–Val531 are compositionally biased toward low complexity. The segment at Thr581–Pro814 is TOG 3. HEAT repeat units follow at residues Glu587 to Asp624, Ala625 to Ser662, Thr672 to Val710, and Leu745 to Lys782. Residues Asp804–Ala849 form a disordered region. A compositionally biased stretch (polar residues) spans Gln819 to Pro830. The span at Asp831–Pro845 shows a compositional bias: acidic residues. TOG stretches follow at residues Ala849–Pro1087 and Thr1179–Pro1415. HEAT repeat units lie at residues Asp856–Leu893, Pro896–Ala933, Asn937–Tyr974, and Glu1017–Phe1054. A disordered region spans residues Leu1083–Glu1140. Residues Glu1099–Asp1428 form an association with microtubule lattice region. HEAT repeat units follow at residues Arg1205–Asp1242, Asn1272–Phe1309, Lys1311–Met1344, and Ile1346–Glu1383. Disordered regions lie at residues Ala1407–Gln1455 and Asn1940–Asp1959. The span at Asn1940–Gly1957 shows a compositional bias: polar residues.

It belongs to the TOG/XMAP215 family. As to quaternary structure, interacts with tacc, dgt6. Interacts with mv. Interacts with Patronin.

Its subcellular location is the cytoplasm. The protein resides in the cytoskeleton. The protein localises to the microtubule organizing center. It is found in the centrosome. It localises to the spindle. Its subcellular location is the perinuclear region. In terms of biological role, binds to the plus end of microtubules and regulates microtubule dynamics and microtubule organization. Function in neurons is essential for adult survival, and is important for climbing behavior and activity. Promotes cytoplasmic microtubule nucleation and elongation. May act as a microtubule antipause factor that rapidly catalyzes the transition from pause to either growth or shrinkage. Involved in mitotic spindle elongation. Involved in the establishment of cell polarity and mitotic spindle orientation in neuroblasts. Required for maintaining the bipolarity of acentrosomal meiotic spindles; the function is dependent on tacc and involves ncd. Involved in oocyte microtubule cytoskeleton organization and bicoid mRNA localization. Seems to be involved in elongation of kinetochore-derived microtubule fibers. In fat body cells, essential component of perinuclear non-centrosomal microtubule-organizing centers (ncMTOCs) which function to accommodate the organization of microtubule (MT) networks to control nuclear positioning and dynein motor-based retrograde endosomal trafficking. Within the ncMTOCs, Msp300 and shot anchors the ncMTOC at the nuclear surface and recruits the MT minus-end regulators Patronin and Nin for assembly, anchoring and/or stabilization of circumferential and radial MTs at the ncMTOCs. Patronin, and perhaps Nin, then recruits msps to the ncMTOC where it is required for the gamma-tubulin-independent elongation and assembly of radial MTs. This is Protein mini spindles (msps) from Drosophila melanogaster (Fruit fly).